A 171-amino-acid polypeptide reads, in one-letter code: Large ribosomal subunit protein bL9 (171 aa).

Belongs to the bacterial ribosomal protein bL9 family.

Functionally, binds to the 23S rRNA. The protein is Large ribosomal subunit protein bL9 of Rickettsia africae (strain ESF-5).